The following is a 380-amino-acid chain: 1-deoxy-D-xylulose 5-phosphate reductoisomerase (380 aa).

NADPH is bound by residues Thr9, Gly10, Ser11, Val12, Arg36, and Asn117. Lys118 contributes to the 1-deoxy-D-xylulose 5-phosphate binding site. Glu119 is an NADPH binding site. Asp139 lines the Mn(2+) pocket. 4 residues coordinate 1-deoxy-D-xylulose 5-phosphate: Ser140, Glu141, Ser165, and His188. Glu141 provides a ligand contact to Mn(2+). An NADPH-binding site is contributed by Gly194. 1-deoxy-D-xylulose 5-phosphate is bound by residues Ser201, Asn206, Lys207, and Glu210. A Mn(2+)-binding site is contributed by Glu210.

Belongs to the DXR family. Mg(2+) serves as cofactor. Requires Mn(2+) as cofactor.

The catalysed reaction is 2-C-methyl-D-erythritol 4-phosphate + NADP(+) = 1-deoxy-D-xylulose 5-phosphate + NADPH + H(+). The protein operates within isoprenoid biosynthesis; isopentenyl diphosphate biosynthesis via DXP pathway; isopentenyl diphosphate from 1-deoxy-D-xylulose 5-phosphate: step 1/6. Its function is as follows. Catalyzes the NADPH-dependent rearrangement and reduction of 1-deoxy-D-xylulose-5-phosphate (DXP) to 2-C-methyl-D-erythritol 4-phosphate (MEP). The chain is 1-deoxy-D-xylulose 5-phosphate reductoisomerase from Aquifex aeolicus (strain VF5).